A 434-amino-acid chain; its full sequence is Eukaryotic translation initiation factor 3 subunit E (434 aa).

The PCI domain maps to 219-392 (FFNHPKGRDL…GHVVMGTQPL (174 aa)).

The protein belongs to the eIF-3 subunit E family. In terms of assembly, component of the eukaryotic translation initiation factor 3 (eIF-3) complex. The eIF-3 complex interacts with pix. Interacts with mxt.

The protein localises to the cytoplasm. Its function is as follows. Component of the eukaryotic translation initiation factor 3 (eIF-3) complex, which is involved in protein synthesis of a specialized repertoire of mRNAs and, together with other initiation factors, stimulates binding of mRNA and methionyl-tRNAi to the 40S ribosome. The eIF-3 complex specifically targets and initiates translation of a subset of mRNAs involved in cell proliferation. The polypeptide is Eukaryotic translation initiation factor 3 subunit E (eIF3-S6) (Drosophila grimshawi (Hawaiian fruit fly)).